A 283-amino-acid chain; its full sequence is Elongation factor Ts (283 aa).

The tract at residues 84 to 87 (TDFV) is involved in Mg(2+) ion dislocation from EF-Tu.

It belongs to the EF-Ts family.

The protein resides in the cytoplasm. Its function is as follows. Associates with the EF-Tu.GDP complex and induces the exchange of GDP to GTP. It remains bound to the aminoacyl-tRNA.EF-Tu.GTP complex up to the GTP hydrolysis stage on the ribosome. The protein is Elongation factor Ts of Bifidobacterium longum (strain DJO10A).